Here is a 195-residue protein sequence, read N- to C-terminus: MKTFVIGIGGVTNGGKTTLAKNLQKRLPNCSVISQDDFFKPESEIDIDENGFLQYDVLEALNMEKMMSAVSCWMENPGSSAGPAALESAQGVPILIIEGFLLFNYKPLDTIWNRSYFLTVPYEECKRRRSTRVYEPPDPPGYFDGHVWPMYLKHRQEMNSITWDIVYLDGTRSEEDLFSQVYEDVKQELEKQNGL.

10–18 lines the ATP pocket; that stretch reads GVTNGGKTT. Mg(2+) is bound by residues Thr-17 and Asp-36. The active-site Proton acceptor is Asp-36. Residues 36–39 and 55–56 each bind substrate; these read DDFF and YD. Residue Arg-128 participates in ATP binding. Substrate is bound by residues Arg-129 and 134-135; that span reads YE. ATP contacts are provided by residues 132–134 and 172–174; these read RVY and RSE.

Belongs to the uridine kinase family. NRK subfamily. In terms of assembly, monomer.

The enzyme catalyses beta-nicotinamide D-riboside + ATP = beta-nicotinamide D-ribonucleotide + ADP + H(+). The catalysed reaction is beta-D-ribosylnicotinate + ATP = nicotinate beta-D-ribonucleotide + ADP + H(+). It participates in cofactor biosynthesis; NAD(+) biosynthesis. In terms of biological role, catalyzes the phosphorylation of nicotinamide riboside (NR) and nicotinic acid riboside (NaR) to form nicotinamide mononucleotide (NMN) and nicotinic acid mononucleotide (NaMN). This chain is Nicotinamide riboside kinase 1 (Nmrk1), found in Rattus norvegicus (Rat).